Here is a 75-residue protein sequence, read N- to C-terminus: DNA-directed RNA polymerase subunit omega (75 aa).

The protein belongs to the RNA polymerase subunit omega family. In terms of assembly, in cyanobacteria the RNAP catalytic core is composed of 2 alpha, 1 beta, 1 beta', 1 gamma and 1 omega subunit. When a sigma factor is associated with the core the holoenzyme is formed, which can initiate transcription.

It carries out the reaction RNA(n) + a ribonucleoside 5'-triphosphate = RNA(n+1) + diphosphate. Its function is as follows. Promotes RNA polymerase assembly. Latches the N- and C-terminal regions of the beta' subunit thereby facilitating its interaction with the beta and alpha subunits. In Gloeothece citriformis (strain PCC 7424) (Cyanothece sp. (strain PCC 7424)), this protein is DNA-directed RNA polymerase subunit omega.